A 459-amino-acid polypeptide reads, in one-letter code: UDP-N-acetylmuramoylalanine--D-glutamate ligase (459 aa).

Residue 120 to 126 participates in ATP binding; that stretch reads GSNGKTT.

This sequence belongs to the MurCDEF family.

Its subcellular location is the cytoplasm. The catalysed reaction is UDP-N-acetyl-alpha-D-muramoyl-L-alanine + D-glutamate + ATP = UDP-N-acetyl-alpha-D-muramoyl-L-alanyl-D-glutamate + ADP + phosphate + H(+). The protein operates within cell wall biogenesis; peptidoglycan biosynthesis. Functionally, cell wall formation. Catalyzes the addition of glutamate to the nucleotide precursor UDP-N-acetylmuramoyl-L-alanine (UMA). The sequence is that of UDP-N-acetylmuramoylalanine--D-glutamate ligase from Lactobacillus helveticus (strain DPC 4571).